The primary structure comprises 1128 residues: Large proline-rich protein BAG6 (1128 aa).

Methionine 1 carries the post-translational modification N-acetylmethionine. In terms of domain architecture, Ubiquitin-like spans leucine 17–threonine 92. Disordered stretches follow at residues arginine 87 to aspartate 126, cysteine 185 to serine 267, valine 380 to histidine 435, isoleucine 456 to glycine 523, and proline 555 to aspartate 598. Residues proline 95–threonine 108 are compositionally biased toward low complexity. Position 96 is a phosphoserine (serine 96). Phosphothreonine is present on threonine 117. The span at serine 189–proline 201 shows a compositional bias: polar residues. The stretch at arginine 236–histidine 265 is repeat 1. The tract at residues arginine 236–methionine 630 is 4 X 29 AA approximate repeats. A compositionally biased stretch (low complexity) spans serine 238–serine 247. Pro residues-rich tracts occupy residues glycine 248–alanine 257 and arginine 388–proline 402. Positions glycine 403–serine 412 are enriched in low complexity. Copy 2 of the repeat occupies proline 410–valine 438. Composition is skewed to pro residues over residues alanine 422–alanine 433 and proline 502–proline 515. Low complexity predominate over residues alanine 564–proline 581. 2 repeat units span residues serine 569–alanine 596 and serine 602–methionine 630. Residues proline 583 to proline 594 show a composition bias toward pro residues. Disordered regions lie at residues glutamine 648 to proline 689 and valine 939 to proline 1128. Residues proline 652 to proline 677 are compositionally biased toward pro residues. Over residues proline 678 to glycine 688 the composition is skewed to gly residues. Phosphoserine is present on residues serine 960 and serine 969. Over residues alanine 999–proline 1016 the composition is skewed to low complexity. The interval tryptophan 1006–aspartate 1036 is required for interaction with GET4. The Nuclear localization site motif lies at alanine 1008–methionine 1050. The sufficient for the delivery of client proteins to the endoplasmic reticulum stretch occupies residues isoleucine 1018 to proline 1128. Threonine 1049 is modified (phosphothreonine). Positions glycine 1054–asparagine 1111 are BAG-similar domain, required and sufficient for interaction with UBL4A. A compositionally biased stretch (low complexity) spans alanine 1062 to alanine 1072. Serine 1077 and serine 1113 each carry phosphoserine.

Component of the BAG6/BAT3 complex, also named BAT3 complex, at least composed of BAG6, UBL4A and GET4/TRC35. Interacts with GET4; the interaction is direct and localizes BAG6 in the cytosol. Interacts with UBL4A; the interaction is direct and required for UBL4A protein stability. Interacts with AIFM1. Interacts with HSPA2. Interacts with CTCFL. Interacts with p300/EP300. Interacts (via ubiquitin-like domain) with RNF126; required for BAG6-dependent ubiquitination of proteins mislocalized to the cytosol. Interacts (via ubiquitin-like domain) with SGTA; SGTA competes with RNF126 by binding the same region of BAG6, thereby promoting deubiquitination of BAG6-target proteins and rescuing them from degradation. Interacts with ricin A chain. Interacts with VCP and AMFR; both form the VCP/p97-AMFR/gp78 complex. Interacts with SYVN1. Interacts with USP13; the interaction is direct and may mediate UBL4A deubiquitination. Interacts with ZFAND2B. Interacts with KPNA2. Interacts with UBQLN4. Post-translationally, ricin can induce a cleavage by the caspase CASP3. The released C-terminal peptide induces apoptosis.

It localises to the cytoplasm. The protein localises to the cytosol. It is found in the nucleus. The protein resides in the secreted. Its subcellular location is the extracellular exosome. ATP-independent molecular chaperone preventing the aggregation of misfolded and hydrophobic patches-containing proteins. Functions as part of a cytosolic protein quality control complex, the BAG6/BAT3 complex, which maintains these client proteins in a soluble state and participates in their proper delivery to the endoplasmic reticulum or alternatively can promote their sorting to the proteasome where they undergo degradation. The BAG6/BAT3 complex is involved in the post-translational delivery of tail-anchored/type II transmembrane proteins to the endoplasmic reticulum membrane. Recruited to ribosomes, it interacts with the transmembrane region of newly synthesized tail-anchored proteins and together with SGTA and ASNA1 mediates their delivery to the endoplasmic reticulum. Client proteins that cannot be properly delivered to the endoplasmic reticulum are ubiquitinated by RNF126, an E3 ubiquitin-protein ligase associated with BAG6 and are sorted to the proteasome. SGTA which prevents the recruitment of RNF126 to BAG6 may negatively regulate the ubiquitination and the proteasomal degradation of client proteins. Similarly, the BAG6/BAT3 complex also functions as a sorting platform for proteins of the secretory pathway that are mislocalized to the cytosol either delivering them to the proteasome for degradation or to the endoplasmic reticulum. The BAG6/BAT3 complex also plays a role in the endoplasmic reticulum-associated degradation (ERAD), a quality control mechanism that eliminates unwanted proteins of the endoplasmic reticulum through their retrotranslocation to the cytosol and their targeting to the proteasome. It maintains these retrotranslocated proteins in an unfolded yet soluble state condition in the cytosol to ensure their proper delivery to the proteasome. BAG6 is also required for selective ubiquitin-mediated degradation of defective nascent chain polypeptides by the proteasome. In this context, it may participate in the production of antigenic peptides and play a role in antigen presentation in immune response. BAG6 is also involved in endoplasmic reticulum stress-induced pre-emptive quality control, a mechanism that selectively attenuates the translocation of newly synthesized proteins into the endoplasmic reticulum and reroutes them to the cytosol for proteasomal degradation. BAG6 may ensure the proper degradation of these proteins and thereby protects the endoplasmic reticulum from protein overload upon stress. By inhibiting the polyubiquitination and subsequent proteasomal degradation of HSPA2 it may also play a role in the assembly of the synaptonemal complex during spermatogenesis. Also positively regulates apoptosis by interacting with and stabilizing the proapoptotic factor AIFM1. By controlling the steady-state expression of the IGF1R receptor, indirectly regulates the insulin-like growth factor receptor signaling pathway. In terms of biological role, involved in DNA damage-induced apoptosis: following DNA damage, accumulates in the nucleus and forms a complex with p300/EP300, enhancing p300/EP300-mediated p53/TP53 acetylation leading to increase p53/TP53 transcriptional activity. When nuclear, may also act as a component of some chromatin regulator complex that regulates histone 3 'Lys-4' dimethylation (H3K4me2). Functionally, released extracellularly via exosomes, it is a ligand of the natural killer/NK cells receptor NCR3 and stimulates NK cells cytotoxicity. It may thereby trigger NK cells cytotoxicity against neighboring tumor cells and immature myeloid dendritic cells (DC). Its function is as follows. May mediate ricin-induced apoptosis. The chain is Large proline-rich protein BAG6 from Sus scrofa (Pig).